Reading from the N-terminus, the 180-residue chain is ATP synthase subunit delta (180 aa).

This sequence belongs to the ATPase delta chain family. In terms of assembly, F-type ATPases have 2 components, F(1) - the catalytic core - and F(0) - the membrane proton channel. F(1) has five subunits: alpha(3), beta(3), gamma(1), delta(1), epsilon(1). CF(0) has four main subunits: a(1), b(1), b'(1) and c(10-14). The alpha and beta chains form an alternating ring which encloses part of the gamma chain. F(1) is attached to F(0) by a central stalk formed by the gamma and epsilon chains, while a peripheral stalk is formed by the delta, b and b' chains.

Its subcellular location is the cellular thylakoid membrane. In terms of biological role, f(1)F(0) ATP synthase produces ATP from ADP in the presence of a proton or sodium gradient. F-type ATPases consist of two structural domains, F(1) containing the extramembraneous catalytic core and F(0) containing the membrane proton channel, linked together by a central stalk and a peripheral stalk. During catalysis, ATP synthesis in the catalytic domain of F(1) is coupled via a rotary mechanism of the central stalk subunits to proton translocation. Functionally, this protein is part of the stalk that links CF(0) to CF(1). It either transmits conformational changes from CF(0) to CF(1) or is implicated in proton conduction. The sequence is that of ATP synthase subunit delta from Prochlorococcus marinus (strain MIT 9515).